Consider the following 427-residue polypeptide: MAVLAALLRSGARSRSPLLRRLVQEIRYVERSYVSKPTLKEVVIVSATRTPIGSFLGSLSLLPATKLGSIAIQGAIEKAGIPKEEVKEAYMGNVLQGGEGQAPTRQAVLGAGLPISTPCTTINKVCASGMKAIMMASQSLMCGHQDVMVAGGMESMSNVPYVMNRGSTPYGGVKLEDLIVKDGLTDVYNKIHMGSCAENTAKKLNIARNEQDAYAINSYTRSKAAWEAGKFGNEVIPVTVTVKGQPDVVVKEDEEYKRVDFSKVPKLKTVFQKENGTVTAANASTLNDGAAALVLMTADAAKRLNVTPLARIVAFADAAVEPIDFPIAPVYAASMVLKDVGLKKEDIAMWEVNEAFSLVVLANIKMLEIDPQKVNINGGAVSLGHPIGMSGARIVGHLTHALKQGEYGLASICNGGGGASAMLIQKL.

A mitochondrion-targeting transit peptide spans 1–33 (MAVLAALLRSGARSRSPLLRRLVQEIRYVERSY). K66 is modified (N6-acetyllysine; alternate). K66 is modified (N6-succinyllysine; alternate). K78 carries the post-translational modification N6-succinyllysine. C126 functions as the Acyl-thioester intermediate in the catalytic mechanism. An N6-acetyllysine; alternate mark is found at K174, K181, K190, and K202. Residues K174, K181, K190, and K202 each carry the N6-succinyllysine; alternate modification. Y219 contributes to the CoA binding site. Y219 provides a ligand contact to K(+). N6-acetyllysine; alternate is present on residues K223 and K230. 2 positions are modified to N6-succinyllysine; alternate: K223 and K230. K243 carries the N6-succinyllysine modification. N6-acetyllysine is present on residues K251 and K257. CoA-binding positions include 258–260 (RVD) and K263. K263 carries the post-translational modification N6-acetyllysine; alternate. An N6-succinyllysine; alternate modification is found at K263. 2 positions are modified to N6-succinyllysine: K266 and K268. An N6-acetyllysine modification is found at K273. K(+)-binding residues include A280, A281, and A283. A CoA-binding site is contributed by S284. K338 is modified (N6-acetyllysine). A K(+)-binding site is contributed by V381. C413 functions as the Proton donor/acceptor in the catalytic mechanism.

The protein belongs to the thiolase-like superfamily. Thiolase family. As to quaternary structure, homotetramer. Succinylation at Lys-268, adjacent to a coenzyme A binding site. Desuccinylated by SIRT5.

It is found in the mitochondrion. The enzyme catalyses 2 acetyl-CoA = acetoacetyl-CoA + CoA. The catalysed reaction is propanoyl-CoA + acetyl-CoA = 2-methyl-3-oxobutanoyl-CoA + CoA. The protein operates within lipid metabolism; fatty acid beta-oxidation. With respect to regulation, activated by potassium ions, but not sodium ions. In terms of biological role, this is one of the enzymes that catalyzes the last step of the mitochondrial beta-oxidation pathway, an aerobic process breaking down fatty acids into acetyl-CoA. Using free coenzyme A/CoA, catalyzes the thiolytic cleavage of medium- to long-chain 3-oxoacyl-CoAs into acetyl-CoA and a fatty acyl-CoA shortened by two carbon atoms. The activity of the enzyme is reversible and it can also catalyze the condensation of two acetyl-CoA molecules into acetoacetyl-CoA. Thereby, it plays a major role in ketone body metabolism. This chain is Acetyl-CoA acetyltransferase, mitochondrial (ACAT1), found in Homo sapiens (Human).